We begin with the raw amino-acid sequence, 367 residues long: Peptide chain release factor 2 (367 aa).

Gln254 is subject to N5-methylglutamine.

The protein belongs to the prokaryotic/mitochondrial release factor family. Post-translationally, methylated by PrmC. Methylation increases the termination efficiency of RF2.

The protein localises to the cytoplasm. Functionally, peptide chain release factor 2 directs the termination of translation in response to the peptide chain termination codons UGA and UAA. The sequence is that of Peptide chain release factor 2 from Leptospira interrogans serogroup Icterohaemorrhagiae serovar Lai (strain 56601).